The sequence spans 1386 residues: YLP motif-containing protein 1 (1386 aa).

Disordered stretches follow at residues 1 to 336 (MYPN…EDAR) and 517 to 1068 (TSIP…PPGR). The span at 14-27 (YPPPPVPPPPPPVA) shows a compositional bias: pro residues. Composition is skewed to low complexity over residues 31-50 (ASPG…SSSG) and 59-80 (LAQL…LQPH). Composition is skewed to pro residues over residues 81 to 93 (HLPP…PPVM), 102 to 114 (QPPP…PPGP), 148 to 158 (PESPPVPPGSY), 166 to 176 (MPPPQPPPSYY), and 184 to 203 (YLPP…PPSI). Residues 237 to 259 (STMTPQEQQQYWYRQHLLSLQQR) show a composition bias toward polar residues. The span at 260–270 (TKVHLPGHKKG) shows a compositional bias: basic residues. Residues 276 to 285 (DVPEPIKEEA) show a composition bias toward basic and acidic residues. The span at 302–317 (PPLPPPNEEAPPPLSP) shows a compositional bias: pro residues. Acidic residues predominate over residues 320 to 333 (PQSEDSEDSEDSEE). Pro residues-rich tracts occupy residues 517–558 (TSIP…PPPA), 566–603 (PVLP…PQGM), and 641–650 (PPSPYHPPPQ). Polar residues predominate over residues 651–667 (SEQVNSKPLNKVFSSEQ). The residue at position 683 (lysine 683) is an N6-methyllysine. Over residues 706–722 (RGPREQKEQLQKLKDFG) the composition is skewed to basic and acidic residues. The span at 746–761 (MYPPPGSYRPPPPMGK) shows a compositional bias: pro residues. Low complexity predominate over residues 762-779 (PPGSIVRPSAPPARSSIP). Composition is skewed to pro residues over residues 781 to 803 (TRPP…PPPV) and 848 to 878 (PVLP…PPPV). Lysine 894 is covalently cross-linked (Glycyl lysine isopeptide (Lys-Gly) (interchain with G-Cter in SUMO2)). Composition is skewed to basic and acidic residues over residues 904-938 (ITLR…EPYF), 945-1014 (TDHR…DRPP), 1023-1033 (GERRTYPEERM), and 1049-1068 (RVEK…PPGR). Lysine 951 participates in a covalent cross-link: Glycyl lysine isopeptide (Lys-Gly) (interchain with G-Cter in SUMO2). Positions 1336 to 1343 (KKRVRWAD) are involved in interaction with PPP1CA.

Interacts with PPP1CA and NCOA5. Forms a complex with ILF2, ILF3, KHDRBS1, RBMX, NCOA5 and PPP1CA.

The protein resides in the nucleus. It is found in the nucleus speckle. Plays a role in the reduction of telomerase activity during differentiation of embryonic stem cells by binding to the core promoter of TERT and controlling its down-regulation. This chain is YLP motif-containing protein 1 (Ylpm1), found in Mus musculus (Mouse).